Reading from the N-terminus, the 789-residue chain is DNA topoisomerase 4 subunit A (789 aa).

Residues 34-499 enclose the Topo IIA-type catalytic domain; sequence LPDLRDGLKP…EKQKVQDSDF (466 aa). Tyr-122 (O-(5'-phospho-DNA)-tyrosine intermediate) is an active-site residue.

Belongs to the type II topoisomerase GyrA/ParC subunit family. ParC type 2 subfamily. Heterotetramer composed of ParC and ParE.

It is found in the cell membrane. It catalyses the reaction ATP-dependent breakage, passage and rejoining of double-stranded DNA.. Its function is as follows. Topoisomerase IV is essential for chromosome segregation. It relaxes supercoiled DNA. Performs the decatenation events required during the replication of a circular DNA molecule. In Mycoplasma pneumoniae (strain ATCC 29342 / M129 / Subtype 1) (Mycoplasmoides pneumoniae), this protein is DNA topoisomerase 4 subunit A.